A 587-amino-acid polypeptide reads, in one-letter code: 2-succinyl-5-enolpyruvyl-6-hydroxy-3-cyclohexene-1-carboxylate synthase (587 aa).

Belongs to the TPP enzyme family. MenD subfamily. In terms of assembly, homodimer. It depends on Mg(2+) as a cofactor. The cofactor is Mn(2+). Requires thiamine diphosphate as cofactor.

The catalysed reaction is isochorismate + 2-oxoglutarate + H(+) = 5-enolpyruvoyl-6-hydroxy-2-succinyl-cyclohex-3-ene-1-carboxylate + CO2. The protein operates within quinol/quinone metabolism; 1,4-dihydroxy-2-naphthoate biosynthesis; 1,4-dihydroxy-2-naphthoate from chorismate: step 2/7. It functions in the pathway cofactor biosynthesis; phylloquinone biosynthesis. In terms of biological role, catalyzes the thiamine diphosphate-dependent decarboxylation of 2-oxoglutarate and the subsequent addition of the resulting succinic semialdehyde-thiamine pyrophosphate anion to isochorismate to yield 2-succinyl-5-enolpyruvyl-6-hydroxy-3-cyclohexene-1-carboxylate (SEPHCHC). The chain is 2-succinyl-5-enolpyruvyl-6-hydroxy-3-cyclohexene-1-carboxylate synthase from Prochlorococcus marinus (strain MIT 9312).